Here is a 189-residue protein sequence, read N- to C-terminus: Molybdenum cofactor guanylyltransferase (189 aa).

GTP-binding positions include 12–14, Lys-24, Asp-68, and Asp-94; that span reads LAG. Mg(2+) is bound at residue Asp-94.

The protein belongs to the MobA family. In terms of assembly, monomer. Mg(2+) is required as a cofactor.

It localises to the cytoplasm. The catalysed reaction is Mo-molybdopterin + GTP + H(+) = Mo-molybdopterin guanine dinucleotide + diphosphate. Functionally, transfers a GMP moiety from GTP to Mo-molybdopterin (Mo-MPT) cofactor (Moco or molybdenum cofactor) to form Mo-molybdopterin guanine dinucleotide (Mo-MGD) cofactor. The sequence is that of Molybdenum cofactor guanylyltransferase from Xanthomonas euvesicatoria pv. vesicatoria (strain 85-10) (Xanthomonas campestris pv. vesicatoria).